The following is a 127-amino-acid chain: Small ribosomal subunit protein uS13 (127 aa).

A disordered region spans residues 92 to 127 (HRMGLPVRGQRTRTNARTRRGVRRTVAGKKKASAKK). Residues 101 to 127 (QRTRTNARTRRGVRRTVAGKKKASAKK) show a composition bias toward basic residues.

The protein belongs to the universal ribosomal protein uS13 family. In terms of assembly, part of the 30S ribosomal subunit. Forms a loose heterodimer with protein S19. Forms two bridges to the 50S subunit in the 70S ribosome.

In terms of biological role, located at the top of the head of the 30S subunit, it contacts several helices of the 16S rRNA. In the 70S ribosome it contacts the 23S rRNA (bridge B1a) and protein L5 of the 50S subunit (bridge B1b), connecting the 2 subunits; these bridges are implicated in subunit movement. Contacts the tRNAs in the A and P-sites. This chain is Small ribosomal subunit protein uS13, found in Trichodesmium erythraeum (strain IMS101).